A 293-amino-acid polypeptide reads, in one-letter code: MSFERFFSAEEILIWRKQELSKGGRAVDLDWLLDIGGGLGWSTLQELKIFQSSFHKLDLSLEELSLIWMRHLSDQIPLQHLVGKCPWRDFELKVNSSALIPRQETEILIDIALKKVDAGLMKYGRWADLGTGSGALAVALARALPLWEGHAADCCNDALALAESNINTLTENANVSLHLGDWWEPLKPWWGNFDLVVANPPYIPKTHLSELDPVVRDHEPILALSGGDDGMDSCRKVIKGAMKGLRSGGWLLLEHNFDQSEQALNLMVDSGFLEVDFENDLEGVRRFGLALRP.

S-adenosyl-L-methionine contacts are provided by residues 130-134, Asp153, Trp182, and Asn199; that span reads GTGSG. 199-202 lines the substrate pocket; the sequence is NPPY.

The protein belongs to the protein N5-glutamine methyltransferase family. PrmC subfamily.

It catalyses the reaction L-glutaminyl-[peptide chain release factor] + S-adenosyl-L-methionine = N(5)-methyl-L-glutaminyl-[peptide chain release factor] + S-adenosyl-L-homocysteine + H(+). Its function is as follows. Methylates the class 1 translation termination release factors RF1/PrfA and RF2/PrfB on the glutamine residue of the universally conserved GGQ motif. This is Release factor glutamine methyltransferase from Prochlorococcus marinus (strain SARG / CCMP1375 / SS120).